A 104-amino-acid polypeptide reads, in one-letter code: MQRVLESDTPYFVKGIQRPVSTLSDRDRALLNRRGNAYLNEGKLQEAARVFITTGYHDGLTRIGDVYMRKADVLTALRFYYFARNEQKMRPIVSALSVLIRCLI.

This is an uncharacterized protein from Treponema pallidum (strain Nichols).